Here is a 448-residue protein sequence, read N- to C-terminus: Trigger factor (448 aa).

The PPIase FKBP-type domain maps to 172-257 (GDRVTVDFVG…MKKIEWPHMP (86 aa)).

This sequence belongs to the FKBP-type PPIase family. Tig subfamily.

The protein localises to the cytoplasm. It carries out the reaction [protein]-peptidylproline (omega=180) = [protein]-peptidylproline (omega=0). Involved in protein export. Acts as a chaperone by maintaining the newly synthesized protein in an open conformation. Functions as a peptidyl-prolyl cis-trans isomerase. The polypeptide is Trigger factor (Burkholderia vietnamiensis (strain G4 / LMG 22486) (Burkholderia cepacia (strain R1808))).